Here is a 177-residue protein sequence, read N- to C-terminus: Large ribosomal subunit protein uL6 (177 aa).

This sequence belongs to the universal ribosomal protein uL6 family. As to quaternary structure, part of the 50S ribosomal subunit.

In terms of biological role, this protein binds to the 23S rRNA, and is important in its secondary structure. It is located near the subunit interface in the base of the L7/L12 stalk, and near the tRNA binding site of the peptidyltransferase center. The sequence is that of Large ribosomal subunit protein uL6 from Novosphingobium aromaticivorans (strain ATCC 700278 / DSM 12444 / CCUG 56034 / CIP 105152 / NBRC 16084 / F199).